A 376-amino-acid chain; its full sequence is Lactosylceramide 1,3-N-acetyl-beta-D-glucosaminyltransferase (376 aa).

Residues 1 to 13 (MRLFVSRRVKRWK) are Cytoplasmic-facing. The chain crosses the membrane as a helical; Signal-anchor for type II membrane protein span at residues 14–34 (IFHFFVTCFILSFMVFWSPIN). At 35 to 376 (NYIMSHMKSY…NSYPCWAAFA (342 aa)) the chain is on the lumenal side. Residue Asn-57 is glycosylated (N-linked (GlcNAc...) asparagine).

Belongs to the glycosyltransferase 31 family. As to expression, highly expressed in adult spleen, placenta and cerebellar Purkinje cells where it colocalizes with HNK-1. Expressed at lower level in brain, lung, thymus and muscle.

It localises to the golgi apparatus membrane. The catalysed reaction is a beta-D-Gal-(1-&gt;4)-beta-D-Glc-(1&lt;-&gt;1)-Cer(d18:1(4E)) + UDP-N-acetyl-alpha-D-glucosamine = a beta-D-GlcNAc-(1-&gt;3)-beta-D-Gal-(1-&gt;4)-beta-D-Glc-(1&lt;-&gt;1)-Cer(d18:1(4E)) + UDP + H(+). It carries out the reaction a neolactoside nLc4Cer(d18:1(4E)) + UDP-N-acetyl-alpha-D-glucosamine = a neolactoside IV(3)-beta-GlcNAc-nLc4Cer(d18:1(4E)) + UDP + H(+). It functions in the pathway protein modification; protein glycosylation. Beta-1,3-N-acetylglucosaminyltransferase that plays a key role in the synthesis of lacto- or neolacto-series carbohydrate chains on glycolipids, notably by participating in biosynthesis of HNK-1 and Lewis X carbohydrate structures. Has strong activity toward lactosylceramide (LacCer) and neolactotetraosylceramide (nLc(4)Cer; paragloboside), resulting in the synthesis of Lc(3)Cer and neolactopentaosylceramide (nLc(5)Cer), respectively. Plays a central role in regulating neolacto-series glycolipid synthesis during embryonic development. This Mus musculus (Mouse) protein is Lactosylceramide 1,3-N-acetyl-beta-D-glucosaminyltransferase.